Here is a 135-residue protein sequence, read N- to C-terminus: Translation initiation factor 2 subunit beta (135 aa).

Belongs to the eIF-2-beta/eIF-5 family. In terms of assembly, heterotrimer composed of an alpha, a beta and a gamma chain.

Functionally, eIF-2 functions in the early steps of protein synthesis by forming a ternary complex with GTP and initiator tRNA. The chain is Translation initiation factor 2 subunit beta from Methanobrevibacter smithii (strain ATCC 35061 / DSM 861 / OCM 144 / PS).